Here is a 120-residue protein sequence, read N- to C-terminus: MAKYRAGRINEEVKKEVSSIIHNDIKDPRLSAMVSVTDVDVTKDLKYAKVYVSIFGNEKAKEESLQALKSSVGFIRKEIGRRVKLRNTPEVIIEVDNSIERGMHIDELLHSIKENKSNDN.

The protein belongs to the RbfA family. As to quaternary structure, monomer. Binds 30S ribosomal subunits, but not 50S ribosomal subunits or 70S ribosomes.

The protein localises to the cytoplasm. One of several proteins that assist in the late maturation steps of the functional core of the 30S ribosomal subunit. Associates with free 30S ribosomal subunits (but not with 30S subunits that are part of 70S ribosomes or polysomes). Required for efficient processing of 16S rRNA. May interact with the 5'-terminal helix region of 16S rRNA. The chain is Ribosome-binding factor A from Clostridium botulinum (strain Loch Maree / Type A3).